The primary structure comprises 1768 residues: Maestro heat-like repeat-containing protein family member 1 homolog (1768 aa).

6 HEAT repeats span residues 4–47 (TSQV…HQPN), 164–203 (VHNPFGLVPFLTDILSRTVPLLQHVKTDPLRCAWARAICS), 816–856 (QRLQ…AVHP), 1166–1204 (QSQMQIYLSAIFEMLTDRQSHVSSAAAQLLTYAVMARGA), 1483–1521 (EQLLVKCIRRLEDSLTDPSLRIRKLCVKGLGELSECSST), and 1731–1768 (TISRELVFTGLVALLKDSEDVNVRISATRAIANLHDFH).

Belongs to the MROH1 family. In terms of assembly, homooligomer; homooligomerizes at lysosome scission sites.

Its subcellular location is the lysosome membrane. In terms of biological role, lysosome fission factor. Recruited to lysosomes by rab-7 at scission sites and homooligomerizes to mediate the constriction and scission of lysosomal tubules. May sever membranes by inserting amphipathic helices into one bilayer leaflet. Lysosome fission is required to maintain their steady-state number, shape, size, composition and function, and to accomplish regeneration. This is Maestro heat-like repeat-containing protein family member 1 homolog from Caenorhabditis elegans.